The primary structure comprises 365 residues: Flagellar P-ring protein (365 aa).

The N-terminal stretch at 1–22 (MSVRRFLVWILALTVGAAPVMA) is a signal peptide.

It belongs to the FlgI family. As to quaternary structure, the basal body constitutes a major portion of the flagellar organelle and consists of four rings (L,P,S, and M) mounted on a central rod.

It localises to the periplasm. It is found in the bacterial flagellum basal body. Functionally, assembles around the rod to form the L-ring and probably protects the motor/basal body from shearing forces during rotation. This Marinobacter nauticus (strain ATCC 700491 / DSM 11845 / VT8) (Marinobacter aquaeolei) protein is Flagellar P-ring protein.